The sequence spans 417 residues: uncharacterized protein (417 aa).

The helical transmembrane segment at 10–30 (ALVCFSILSILVLACGCVNTP) threads the bilayer. The interval 84–106 (QENHPLQSNQNYEQTNGNFNEEN) is disordered. Residues 86 to 106 (NHPLQSNQNYEQTNGNFNEEN) are compositionally biased toward polar residues. The chain crosses the membrane as a helical span at residues 148–168 (LYYIKVIDPIVGGLAGIDIYV).

It is found in the cell membrane. This is an uncharacterized protein from Methanocaldococcus jannaschii (strain ATCC 43067 / DSM 2661 / JAL-1 / JCM 10045 / NBRC 100440) (Methanococcus jannaschii).